We begin with the raw amino-acid sequence, 707 residues long: Lipase maturation factor 2 (707 aa).

The next 10 helical transmembrane spans lie at A10–I30, M78–L98, L102–L122, W126–M146, G158–V178, F220–F240, I256–C276, L309–F329, I358–M378, and L395–Y415. N-linked (GlcNAc...) asparagine glycosylation occurs at N483. A helical transmembrane segment spans residues L634–G654. The segment at V661–S707 is disordered. Positions S680–G694 are enriched in low complexity. Residues D696–S707 are compositionally biased toward basic and acidic residues.

Belongs to the lipase maturation factor family.

The protein localises to the endoplasmic reticulum membrane. Functionally, involved in the maturation of specific proteins in the endoplasmic reticulum. The sequence is that of Lipase maturation factor 2 (lmf2) from Xenopus laevis (African clawed frog).